The primary structure comprises 143 residues: 16 kDa calcium-binding protein (143 aa).

EF-hand domains follow at residues 2–37, 41–71, 73–108, and 109–143; these read SEEKQWTEVFHAIDKDKNGFLTREEIAQCLKEVGVC, ADKIIKETDMNSDGKISLEEYLNALRKLPPR, KCVARWREVFQSIDKDGSGKVSIKELDEFLKTSGMD, and IDQNSLRNWMTQNDKNKDGELDYDEFLAYVRQTYK. Residues Asp-15, Asp-17, Asn-19, Glu-26, Asp-49, Asn-51, Asp-53, Lys-55, Glu-60, Asp-86, Asp-88, Ser-90, Lys-92, Glu-97, Asp-122, Asn-124, Asp-126, Glu-128, and Glu-133 each contribute to the Ca(2+) site.

Found in eggs.

Functionally, calcium-binding protein. In Schistosoma mansoni (Blood fluke), this protein is 16 kDa calcium-binding protein.